Reading from the N-terminus, the 546-residue chain is Arginine--tRNA ligase (546 aa).

The short motif at 117-127 (ANPTGPLHIGR) is the 'HIGH' region element.

It belongs to the class-I aminoacyl-tRNA synthetase family.

The protein resides in the cytoplasm. The enzyme catalyses tRNA(Arg) + L-arginine + ATP = L-arginyl-tRNA(Arg) + AMP + diphosphate. This is Arginine--tRNA ligase from Thermoplasma acidophilum (strain ATCC 25905 / DSM 1728 / JCM 9062 / NBRC 15155 / AMRC-C165).